The primary structure comprises 148 residues: NADPH-dependent 7-cyano-7-deazaguanine reductase (148 aa).

Residue cysteine 50 is the Thioimide intermediate of the active site. The active-site Proton donor is aspartate 57. Substrate-binding positions include 72-74 (VES) and 91-92 (HE).

Belongs to the GTP cyclohydrolase I family. QueF type 1 subfamily.

It localises to the cytoplasm. It carries out the reaction 7-aminomethyl-7-carbaguanine + 2 NADP(+) = 7-cyano-7-deazaguanine + 2 NADPH + 3 H(+). It participates in tRNA modification; tRNA-queuosine biosynthesis. Catalyzes the NADPH-dependent reduction of 7-cyano-7-deazaguanine (preQ0) to 7-aminomethyl-7-deazaguanine (preQ1). This is NADPH-dependent 7-cyano-7-deazaguanine reductase from Helicobacter acinonychis (strain Sheeba).